A 159-amino-acid polypeptide reads, in one-letter code: Pupal cuticle protein Edg-91 (159 aa).

An N-terminal signal peptide occupies residues methionine 1–alanine 21.

In terms of tissue distribution, larval (posterior) and imaginal (anterior) epidermis.

Its function is as follows. Component of the pupal cuticle. The protein is Pupal cuticle protein Edg-91 (Edg91) of Drosophila melanogaster (Fruit fly).